The primary structure comprises 293 residues: Homoserine kinase (293 aa).

ATP is bound at residue 84 to 94; sequence PFSRGLGSSSS.

Belongs to the GHMP kinase family. Homoserine kinase subfamily.

Its subcellular location is the cytoplasm. The catalysed reaction is L-homoserine + ATP = O-phospho-L-homoserine + ADP + H(+). The protein operates within amino-acid biosynthesis; L-threonine biosynthesis; L-threonine from L-aspartate: step 4/5. In terms of biological role, catalyzes the ATP-dependent phosphorylation of L-homoserine to L-homoserine phosphate. In Campylobacter fetus subsp. fetus (strain 82-40), this protein is Homoserine kinase.